Reading from the N-terminus, the 111-residue chain is uncharacterized protein (111 aa).

This is an uncharacterized protein from Aquifex aeolicus (strain VF5).